A 334-amino-acid polypeptide reads, in one-letter code: Holliday junction branch migration complex subunit RuvB (334 aa).

Positions alanine 4 to tyrosine 184 are large ATPase domain (RuvB-L). ATP contacts are provided by residues isoleucine 23, arginine 24, glycine 65, lysine 68, threonine 69, threonine 70, glutamate 131 to tyrosine 133, arginine 174, tyrosine 184, and arginine 221. Threonine 69 contributes to the Mg(2+) binding site. Residues glutamine 185–aspartate 255 form a small ATPAse domain (RuvB-S) region. The segment at alanine 258–glutamate 334 is head domain (RuvB-H). The DNA site is built by arginine 294, arginine 313, and arginine 318.

This sequence belongs to the RuvB family. In terms of assembly, homohexamer. Forms an RuvA(8)-RuvB(12)-Holliday junction (HJ) complex. HJ DNA is sandwiched between 2 RuvA tetramers; dsDNA enters through RuvA and exits via RuvB. An RuvB hexamer assembles on each DNA strand where it exits the tetramer. Each RuvB hexamer is contacted by two RuvA subunits (via domain III) on 2 adjacent RuvB subunits; this complex drives branch migration. In the full resolvosome a probable DNA-RuvA(4)-RuvB(12)-RuvC(2) complex forms which resolves the HJ.

The protein resides in the cytoplasm. It catalyses the reaction ATP + H2O = ADP + phosphate + H(+). The RuvA-RuvB-RuvC complex processes Holliday junction (HJ) DNA during genetic recombination and DNA repair, while the RuvA-RuvB complex plays an important role in the rescue of blocked DNA replication forks via replication fork reversal (RFR). RuvA specifically binds to HJ cruciform DNA, conferring on it an open structure. The RuvB hexamer acts as an ATP-dependent pump, pulling dsDNA into and through the RuvAB complex. RuvB forms 2 homohexamers on either side of HJ DNA bound by 1 or 2 RuvA tetramers; 4 subunits per hexamer contact DNA at a time. Coordinated motions by a converter formed by DNA-disengaged RuvB subunits stimulates ATP hydrolysis and nucleotide exchange. Immobilization of the converter enables RuvB to convert the ATP-contained energy into a lever motion, pulling 2 nucleotides of DNA out of the RuvA tetramer per ATP hydrolyzed, thus driving DNA branch migration. The RuvB motors rotate together with the DNA substrate, which together with the progressing nucleotide cycle form the mechanistic basis for DNA recombination by continuous HJ branch migration. Branch migration allows RuvC to scan DNA until it finds its consensus sequence, where it cleaves and resolves cruciform DNA. This is Holliday junction branch migration complex subunit RuvB from Edwardsiella ictaluri (strain 93-146).